The following is a 183-amino-acid chain: Acireductone dioxygenase (183 aa).

Residues histidine 99, histidine 101, glutamate 105, and histidine 144 each coordinate Fe(2+). Ni(2+) contacts are provided by histidine 99, histidine 101, glutamate 105, and histidine 144.

It belongs to the acireductone dioxygenase (ARD) family. In terms of assembly, monomer. It depends on Fe(2+) as a cofactor. The cofactor is Ni(2+).

It carries out the reaction 1,2-dihydroxy-5-(methylsulfanyl)pent-1-en-3-one + O2 = 3-(methylsulfanyl)propanoate + CO + formate + 2 H(+). The enzyme catalyses 1,2-dihydroxy-5-(methylsulfanyl)pent-1-en-3-one + O2 = 4-methylsulfanyl-2-oxobutanoate + formate + 2 H(+). It participates in amino-acid biosynthesis; L-methionine biosynthesis via salvage pathway; L-methionine from S-methyl-5-thio-alpha-D-ribose 1-phosphate: step 5/6. Catalyzes 2 different reactions between oxygen and the acireductone 1,2-dihydroxy-3-keto-5-methylthiopentene (DHK-MTPene) depending upon the metal bound in the active site. Fe-containing acireductone dioxygenase (Fe-ARD) produces formate and 2-keto-4-methylthiobutyrate (KMTB), the alpha-ketoacid precursor of methionine in the methionine recycle pathway. Ni-containing acireductone dioxygenase (Ni-ARD) produces methylthiopropionate, carbon monoxide and formate, and does not lie on the methionine recycle pathway. This is Acireductone dioxygenase from Microcystis aeruginosa.